A 71-amino-acid polypeptide reads, in one-letter code: Large ribosomal subunit protein uL30 (71 aa).

It belongs to the universal ribosomal protein uL30 family. In terms of assembly, part of the 50S ribosomal subunit.

The sequence is that of Large ribosomal subunit protein uL30 from Mycolicibacterium paratuberculosis (strain ATCC BAA-968 / K-10) (Mycobacterium paratuberculosis).